The primary structure comprises 413 residues: F-box protein CPR1 (413 aa).

Positions 1–48 (MATIPMDIVNDIFLRLPAKTLVRCRALSKPCYHLINDPDFIESHLHRV) constitute an F-box domain.

Part of a SCF (ASK-cullin-F-box) protein ligase complex. Interacts with SKP1A/ASK1, SPK1B/ASK2, ASK9, ASK10, ASK11, ASK13, ASK14, ASK16, ASK17, ASK18 and ASK19. Interacts with TRAF1B. Expressed in seedling, root, stem, leaves, inflorescence and silique, especially in veins and trichomes.

It is found in the cytoplasm. Its subcellular location is the nucleus. The protein operates within protein modification; protein ubiquitination. Functionally, component of SCF(ASK-cullin-F-box) E3 ubiquitin ligase complexes, which may mediate the ubiquitination and subsequent proteasomal degradation of target proteins. Regulates negatively both salicylic acid (SA)-dependent and SA-independent defense signaling. The chain is F-box protein CPR1 (CPR1) from Arabidopsis thaliana (Mouse-ear cress).